The primary structure comprises 487 residues: Glycogen synthase 1 (487 aa).

K15 is a binding site for ADP-alpha-D-glucose.

The protein belongs to the glycosyltransferase 1 family. Bacterial/plant glycogen synthase subfamily.

It catalyses the reaction [(1-&gt;4)-alpha-D-glucosyl](n) + ADP-alpha-D-glucose = [(1-&gt;4)-alpha-D-glucosyl](n+1) + ADP + H(+). Its pathway is glycan biosynthesis; glycogen biosynthesis. Its function is as follows. Synthesizes alpha-1,4-glucan chains using ADP-glucose. This is Glycogen synthase 1 from Nitrosococcus oceani (strain ATCC 19707 / BCRC 17464 / JCM 30415 / NCIMB 11848 / C-107).